Consider the following 328-residue polypeptide: QDLPGNDNSTATLCLGHHAVPNGTLVKTITNDQIEVTNATELVQSSSTGKICNNPHRILDGINCTLIDALLGDPHCDVFQDETWDLFVERSKAFSNCYPYDVPDYASLRSLVASSGTLEFITEGFTWTGVTQNGGSNACKRGPDSGFFSRLNWLTKSGSTYPVLNVTMPNNDNFDKLYIWGVHHPSTNQEQTSLYVQASGRVTVSTRRSQQTIIPNIGSRPWVRGLSSRISIYWTIVKPGDVLVINSNGNLIAPRGYFKMRTGKSSIMRSDAPIDTCISECITPNGSIPNDKPFQNVNKITYGACPKYVKQNTLKLATGMRNVPEKQT.

N-linked (GlcNAc...) asparagine; by host glycosylation is found at Asn-8, Asn-22, Asn-38, and Asn-63. 4 disulfides stabilise this stretch: Cys-52–Cys-277, Cys-64–Cys-76, Cys-97–Cys-139, and Cys-281–Cys-305. Residues Asn-165 and Asn-285 are each glycosylated (N-linked (GlcNAc...) asparagine; by host).

The protein belongs to the influenza viruses hemagglutinin family. As to quaternary structure, homotrimer of disulfide-linked HA1-HA2. In terms of processing, in natural infection, inactive HA is matured into HA1 and HA2 outside the cell by one or more trypsin-like, arginine-specific endoprotease secreted by the bronchial epithelial cells. One identified protease that may be involved in this process is secreted in lungs by club cells. Palmitoylated.

The protein resides in the virion membrane. Its subcellular location is the host apical cell membrane. Its function is as follows. Binds to sialic acid-containing receptors on the cell surface, bringing about the attachment of the virus particle to the cell. This attachment induces virion internalization of about two third of the virus particles through clathrin-dependent endocytosis and about one third through a clathrin- and caveolin-independent pathway. Plays a major role in the determination of host range restriction and virulence. Class I viral fusion protein. Responsible for penetration of the virus into the cell cytoplasm by mediating the fusion of the membrane of the endocytosed virus particle with the endosomal membrane. Low pH in endosomes induces an irreversible conformational change in HA2, releasing the fusion hydrophobic peptide. Several trimers are required to form a competent fusion pore. This is Hemagglutinin (HA) from Aves (Human).